The chain runs to 301 residues: Protoheme IX farnesyltransferase (301 aa).

9 helical membrane passes run 20 to 42 (FTEL…GMWL), 55 to 75 (VDVI…SGAF), 105 to 125 (ALMV…MTTW), 126 to 146 (QAGV…SLYA), 150 to 172 (LVSN…WFAV), 176 to 198 (FSIV…FYAI), 227 to 247 (MFFW…LGIV), 249 to 269 (VVLA…GFKM), and 280 to 300 (FVYS…ISIF).

The protein belongs to the UbiA prenyltransferase family. Protoheme IX farnesyltransferase subfamily. As to quaternary structure, interacts with CtaA.

The protein resides in the cell membrane. The enzyme catalyses heme b + (2E,6E)-farnesyl diphosphate + H2O = Fe(II)-heme o + diphosphate. Its pathway is porphyrin-containing compound metabolism; heme O biosynthesis; heme O from protoheme: step 1/1. Its function is as follows. Converts heme B (protoheme IX) to heme O by substitution of the vinyl group on carbon 2 of heme B porphyrin ring with a hydroxyethyl farnesyl side group. The protein is Protoheme IX farnesyltransferase of Listeria monocytogenes serotype 4b (strain CLIP80459).